We begin with the raw amino-acid sequence, 350 residues long: S-adenosylmethionine:tRNA ribosyltransferase-isomerase (350 aa).

Belongs to the QueA family. In terms of assembly, monomer.

Its subcellular location is the cytoplasm. The catalysed reaction is 7-aminomethyl-7-carbaguanosine(34) in tRNA + S-adenosyl-L-methionine = epoxyqueuosine(34) in tRNA + adenine + L-methionine + 2 H(+). Its pathway is tRNA modification; tRNA-queuosine biosynthesis. Transfers and isomerizes the ribose moiety from AdoMet to the 7-aminomethyl group of 7-deazaguanine (preQ1-tRNA) to give epoxyqueuosine (oQ-tRNA). This chain is S-adenosylmethionine:tRNA ribosyltransferase-isomerase, found in Vibrio vulnificus (strain CMCP6).